We begin with the raw amino-acid sequence, 527 residues long: Type 2 DNA topoisomerase 6 subunit B (527 aa).

Residues asparagine 39, aspartate 73, 94-95 (SK), 103-110 (GVFGLGLK), and lysine 421 contribute to the ATP site.

Belongs to the TOP6B family. As to quaternary structure, homodimer. Heterotetramer of two Top6A and two Top6B chains.

The enzyme catalyses ATP-dependent breakage, passage and rejoining of double-stranded DNA.. Relaxes both positive and negative superturns and exhibits a strong decatenase activity. The protein is Type 2 DNA topoisomerase 6 subunit B of Pyrobaculum aerophilum (strain ATCC 51768 / DSM 7523 / JCM 9630 / CIP 104966 / NBRC 100827 / IM2).